A 248-amino-acid polypeptide reads, in one-letter code: 2,3-bisphosphoglycerate-dependent phosphoglycerate mutase (248 aa).

Substrate contacts are provided by residues 8-15 (RHGESQWN), 21-22 (TG), arginine 60, 87-90 (ERHY), lysine 98, 114-115 (RR), and 183-184 (GN). The Tele-phosphohistidine intermediate role is filled by histidine 9. Glutamate 87 acts as the Proton donor/acceptor in catalysis.

The protein belongs to the phosphoglycerate mutase family. BPG-dependent PGAM subfamily. In terms of assembly, homodimer.

It catalyses the reaction (2R)-2-phosphoglycerate = (2R)-3-phosphoglycerate. It participates in carbohydrate degradation; glycolysis; pyruvate from D-glyceraldehyde 3-phosphate: step 3/5. In terms of biological role, catalyzes the interconversion of 2-phosphoglycerate and 3-phosphoglycerate. The polypeptide is 2,3-bisphosphoglycerate-dependent phosphoglycerate mutase (Alteromonas mediterranea (strain DSM 17117 / CIP 110805 / LMG 28347 / Deep ecotype)).